The chain runs to 632 residues: Extracellular metalloproteinase 2 (632 aa).

Residues 1–19 (MHGLLLAGLAAALPLGVAG) form the signal peptide. Positions 20-244 (LPARQQSGLS…VHNVVDYVAS (225 aa)) are excised as a propeptide. N-linked (GlcNAc...) asparagine glycosylation is present at N270. H429 contacts Zn(2+). E430 is an active-site residue. Residue H433 coordinates Zn(2+).

The protein belongs to the peptidase M36 family. Requires Zn(2+) as cofactor.

It is found in the secreted. In terms of biological role, secreted metalloproteinase probably acting as a virulence factor. The polypeptide is Extracellular metalloproteinase 2 (MEP2) (Trichophyton tonsurans (Scalp ringworm fungus)).